Consider the following 448-residue polypeptide: Adenylyltransferase and sulfurtransferase UBA4 (448 aa).

Residues glycine 88, aspartate 109, 116 to 120 (SNLHR), lysine 133, and 177 to 178 (DT) each bind ATP. Zn(2+)-binding residues include cysteine 219 and cysteine 222. Catalysis depends on cysteine 236, which acts as the Glycyl thioester intermediate; for adenylyltransferase activity. Zn(2+) contacts are provided by cysteine 297 and cysteine 300. A Rhodanese domain is found at 349-446 (QGENSILIDV…WSKEIDSKIP (98 aa)). Cysteine 405 serves as the catalytic Cysteine persulfide intermediate; for sulfurtransferase activity.

In the N-terminal section; belongs to the HesA/MoeB/ThiF family. UBA4 subfamily. Zn(2+) is required as a cofactor.

It localises to the cytoplasm. It is found in the cytosol. The protein operates within tRNA modification; 5-methoxycarbonylmethyl-2-thiouridine-tRNA biosynthesis. In terms of biological role, plays a central role in 2-thiolation of mcm(5)S(2)U at tRNA wobble positions of cytosolic tRNA(Lys), tRNA(Glu) and tRNA(Gln). Acts by mediating the C-terminal thiocarboxylation of sulfur carrier URM1. Its N-terminus first activates URM1 as acyl-adenylate (-COAMP), then the persulfide sulfur on the catalytic cysteine is transferred to URM1 to form thiocarboxylation (-COSH) of its C-terminus. The reaction probably involves hydrogen sulfide that is generated from the persulfide intermediate and that acts as a nucleophile towards URM1. Subsequently, a transient disulfide bond is formed. Does not use thiosulfate as sulfur donor; NFS1 probably acting as a sulfur donor for thiocarboxylation reactions. Prior mcm(5) tRNA modification by the elongator complex is required for 2-thiolation. May also be involved in protein urmylation. The sequence is that of Adenylyltransferase and sulfurtransferase UBA4 from Debaryomyces hansenii (strain ATCC 36239 / CBS 767 / BCRC 21394 / JCM 1990 / NBRC 0083 / IGC 2968) (Yeast).